We begin with the raw amino-acid sequence, 199 residues long: MTEKEKMLAEKWYDANFDQDLINERARAKDICFELNHTKPSDKNKRKELIDELFQTTTDNVSISIPFDTDYGWNVKLGKNVYVNTNCYFMDGGQITIGDNVFIGPNCGFYTATHPLNFHHRNEGFEKAGPINIGSNTWFGGHVAVLPGVTIGEGSVIGAGSVVTKDIPPHSLAVGNPCKVVRKIDNEVPSEALNDETLN.

This sequence belongs to the transferase hexapeptide repeat family.

The sequence is that of Putative acetyltransferase SAR2635 from Staphylococcus aureus (strain MRSA252).